A 1173-amino-acid chain; its full sequence is TBC1 domain family member 5 homolog A (1173 aa).

Disordered regions lie at residues 22–203, 217–324, 425–446, and 823–872; these read KKSK…YYNE, NNYN…RNPN, DQDA…KPVS, and IVNQ…QNKG. Low complexity-rich tracts occupy residues 26 to 107, 127 to 203, and 217 to 290; these read SNIN…NNVN, NNNI…YYNE, and NNYN…QQYY. The stretch at 163–214 forms a coiled coil; sequence NENYNENYNNNNNNNNNNNNNNNNNNNNNNNNNNNNNYYNENNNQQQLQQNY. The segment covering 299-313 has biased composition (basic and acidic residues); the sequence is QHEEFEKEIEQKEQD. Residues 314 to 324 show a composition bias toward polar residues; that stretch reads SSPINVNRNPN. The Rab-GAP TBC domain maps to 374–729; it reads PKDTTVRSIF…ILWDSIFKES (356 aa). A compositionally biased stretch (low complexity) spans 431-441; the sequence is QQQQQQQQQQQ. Positions 885–930 form a coiled coil; that stretch reads TFKQIINDLNEYNEEFQLAKENEQLKQQKSKLQKEVDTLKETQTHV. Residues 983–994 show a composition bias toward polar residues; it reads NNSKNRLPNKSV. Disordered stretches follow at residues 983–1015 and 1054–1089; these read NNSK…QQTS and QSTQ…QQYN. 2 stretches are compositionally biased toward low complexity: residues 995–1015 and 1054–1078; these read QQST…QQTS and QSTQ…QSQQ. The segment covering 1079-1089 has biased composition (polar residues); sequence NNDNSPFQQYN.

Functionally, may act as a GTPase-activating protein for Rab family protein(s). The protein is TBC1 domain family member 5 homolog A (tbc1d5A) of Dictyostelium discoideum (Social amoeba).